A 970-amino-acid chain; its full sequence is uncharacterized protein (970 aa).

Residues 942–970 are disordered; sequence QLSFEEDGWTESEPRPVRREAHVRAKERH. Residues 953–970 are compositionally biased toward basic and acidic residues; the sequence is SEPRPVRREAHVRAKERH.

This is an uncharacterized protein from Frog virus 3 (isolate Goorha) (FV-3).